A 401-amino-acid chain; its full sequence is Nicotinamide/nicotinic acid mononucleotide adenylyltransferase 1 (401 aa).

2 disordered regions span residues 1 to 30 (MDPTRAPDFKPPSADEELIPPPDPESKIPK) and 48 to 123 (APFN…RGVQ). Positions 52–69 (IKRKKKHPKHHHHHHHSR) are enriched in basic residues. A phosphoserine mark is found at serine 91, serine 95, serine 96, and serine 111. 2 residues coordinate NAD(+): serine 173 and phenylalanine 174. Histidine 181 contributes to the ATP binding site. Threonine 253, glycine 288, aspartate 290, tryptophan 301, arginine 320, and asparagine 351 together coordinate NAD(+). 356 to 359 (TKVR) serves as a coordination point for ATP.

This sequence belongs to the eukaryotic NMN adenylyltransferase family. In terms of assembly, homotetramer. Requires Ni(2+) as cofactor.

It is found in the cytoplasm. The protein localises to the nucleus. It catalyses the reaction beta-nicotinamide D-ribonucleotide + ATP + H(+) = diphosphate + NAD(+). The enzyme catalyses nicotinate beta-D-ribonucleotide + ATP + H(+) = deamido-NAD(+) + diphosphate. It participates in cofactor biosynthesis; NAD(+) biosynthesis; deamido-NAD(+) from nicotinate D-ribonucleotide: step 1/1. It functions in the pathway cofactor biosynthesis; NAD(+) biosynthesis; NAD(+) from nicotinamide D-ribonucleotide: step 1/1. Catalyzes the formation of NAD(+) from nicotinamide mononucleotide (NMN) and ATP. Can also use the deamidated form; nicotinic acid mononucleotide (NaMN) as substrate to form deamido-NAD(+) (NaAD). Key enzyme in both de novo and salvage pathways for NAD(+) biosynthesis. Predominantly acts in the salvage pathways via NMN. The chain is Nicotinamide/nicotinic acid mononucleotide adenylyltransferase 1 from Saccharomyces cerevisiae (strain ATCC 204508 / S288c) (Baker's yeast).